A 235-amino-acid polypeptide reads, in one-letter code: Ubiquinone/menaquinone biosynthesis C-methyltransferase UbiE (235 aa).

Residues threonine 60, aspartate 81, and serine 126 each coordinate S-adenosyl-L-methionine.

It belongs to the class I-like SAM-binding methyltransferase superfamily. MenG/UbiE family.

It carries out the reaction a 2-demethylmenaquinol + S-adenosyl-L-methionine = a menaquinol + S-adenosyl-L-homocysteine + H(+). The enzyme catalyses a 2-methoxy-6-(all-trans-polyprenyl)benzene-1,4-diol + S-adenosyl-L-methionine = a 5-methoxy-2-methyl-3-(all-trans-polyprenyl)benzene-1,4-diol + S-adenosyl-L-homocysteine + H(+). Its pathway is quinol/quinone metabolism; menaquinone biosynthesis; menaquinol from 1,4-dihydroxy-2-naphthoate: step 2/2. It participates in cofactor biosynthesis; ubiquinone biosynthesis. Its function is as follows. Methyltransferase required for the conversion of demethylmenaquinol (DMKH2) to menaquinol (MKH2) and the conversion of 2-polyprenyl-6-methoxy-1,4-benzoquinol (DDMQH2) to 2-polyprenyl-3-methyl-6-methoxy-1,4-benzoquinol (DMQH2). The polypeptide is Ubiquinone/menaquinone biosynthesis C-methyltransferase UbiE (Citrifermentans bemidjiense (strain ATCC BAA-1014 / DSM 16622 / JCM 12645 / Bem) (Geobacter bemidjiensis)).